Here is a 469-residue protein sequence, read N- to C-terminus: Glutamate--tRNA ligase (469 aa).

The 'HIGH' region signature appears at 9–19 (PSPTGFLHVGG). Residues 236 to 240 (KLSKR) carry the 'KMSKS' region motif. ATP is bound at residue Lys239.

It belongs to the class-I aminoacyl-tRNA synthetase family. Glutamate--tRNA ligase type 1 subfamily. Monomer.

The protein resides in the cytoplasm. It catalyses the reaction tRNA(Glu) + L-glutamate + ATP = L-glutamyl-tRNA(Glu) + AMP + diphosphate. Functionally, catalyzes the attachment of glutamate to tRNA(Glu) in a two-step reaction: glutamate is first activated by ATP to form Glu-AMP and then transferred to the acceptor end of tRNA(Glu). The chain is Glutamate--tRNA ligase from Shewanella amazonensis (strain ATCC BAA-1098 / SB2B).